A 161-amino-acid polypeptide reads, in one-letter code: Nucleotide-binding protein RSc2549 (161 aa).

It belongs to the YajQ family.

Nucleotide-binding protein. This chain is Nucleotide-binding protein RSc2549, found in Ralstonia nicotianae (strain ATCC BAA-1114 / GMI1000) (Ralstonia solanacearum).